Here is a 529-residue protein sequence, read N- to C-terminus: Peptide chain release factor 3 (529 aa).

The tr-type G domain maps to 11 to 280 (AKRRTFAIIS…GLVAWAPAPM (270 aa)). GTP contacts are provided by residues 20 to 27 (SHPDAGKT), 88 to 92 (DTPGH), and 142 to 145 (NKLD).

The protein belongs to the TRAFAC class translation factor GTPase superfamily. Classic translation factor GTPase family. PrfC subfamily.

It localises to the cytoplasm. Functionally, increases the formation of ribosomal termination complexes and stimulates activities of RF-1 and RF-2. It binds guanine nucleotides and has strong preference for UGA stop codons. It may interact directly with the ribosome. The stimulation of RF-1 and RF-2 is significantly reduced by GTP and GDP, but not by GMP. The sequence is that of Peptide chain release factor 3 from Edwardsiella ictaluri (strain 93-146).